A 181-amino-acid polypeptide reads, in one-letter code: Large ribosomal subunit protein uL10 (181 aa).

It belongs to the universal ribosomal protein uL10 family. In terms of assembly, part of the ribosomal stalk of the 50S ribosomal subunit. The N-terminus interacts with L11 and the large rRNA to form the base of the stalk. The C-terminus forms an elongated spine to which L12 dimers bind in a sequential fashion forming a multimeric L10(L12)X complex.

Functionally, forms part of the ribosomal stalk, playing a central role in the interaction of the ribosome with GTP-bound translation factors. The polypeptide is Large ribosomal subunit protein uL10 (Trichormus variabilis (strain ATCC 29413 / PCC 7937) (Anabaena variabilis)).